The chain runs to 320 residues: Cytochrome f (320 aa).

A signal peptide spans 1 to 35; it reads MQTRNTFSWIREEITRSISVLLMIYIITWASISSA. Heme contacts are provided by Y36, C56, C59, and H60. A helical membrane pass occupies residues 286-306; sequence VQGLLFFLGSVVLAQIFLVLK.

It belongs to the cytochrome f family. As to quaternary structure, the 4 large subunits of the cytochrome b6-f complex are cytochrome b6, subunit IV (17 kDa polypeptide, petD), cytochrome f and the Rieske protein, while the 4 small subunits are PetG, PetL, PetM and PetN. The complex functions as a dimer. Requires heme as cofactor.

It localises to the plastid. The protein resides in the chloroplast thylakoid membrane. Functionally, component of the cytochrome b6-f complex, which mediates electron transfer between photosystem II (PSII) and photosystem I (PSI), cyclic electron flow around PSI, and state transitions. This chain is Cytochrome f, found in Lobularia maritima (Sweet alyssum).